The primary structure comprises 1048 residues: [F-actin]-monooxygenase MICAL1 (1048 aa).

The tract at residues 1-489 (MASPASTNPA…QDLYDMMDKE (489 aa)) is monooxygenase domain. Residues C95, 114 to 116 (EKR), 121 to 123 (RHN), F181, Y293, and D393 each bind FAD. T475 is subject to Phosphothreonine. Residues 488–502 (KEHAQRKSDEPDSRK) show a composition bias toward basic and acidic residues. The tract at residues 488–508 (KEHAQRKSDEPDSRKTTTGSA) is disordered. Residues 507–611 (SAGTEELLHW…YLSHFHSAFK (105 aa)) enclose the Calponin-homology (CH) domain. At S616 the chain carries Phosphoserine. A disordered region spans residues 643–676 (TRAKVDEETPSTEEPPVSEPSMSPNTPELSEHQE). Over residues 654 to 666 (TEEPPVSEPSMSP) the composition is skewed to low complexity. The 63-residue stretch at 681 to 743 (ELCELCGKHL…LQHLPQEDQK (63 aa)) folds into the LIM zinc-binding domain. Zn(2+) contacts are provided by C683, C686, H704, C707, C710, C713, C733, and H736. Disordered stretches follow at residues 741–787 (DQKE…QPAR), 805–825 (IIPD…SDLA), and 839–873 (PVQA…PPLE). Positions 747 to 765 (NNGSLESQELPTPGDSNMQ) are enriched in polar residues. Residues 772-787 (PVTRVSPVPSPSQPAR) show a composition bias toward low complexity. Phosphoserine is present on residues S777 and S781. Coiled coils occupy residues 847-867 (EAIE…EEEE), 906-949 (EEEM…ESSS), and 974-1031 (EEAE…VNQR). A compositionally biased stretch (acidic residues) spans 852-868 (GDDEEEEEEEEEEEEEP). Residues 905–1048 (KEEEMKRFCK…EERRLREMPA (144 aa)) enclose the bMERB domain.

The protein belongs to the Mical family. As to quaternary structure, associates with the SH3 domain of NEDD9. Interacts with VIM and PLXNA3. Interacts with RAB1B, RAB8A, RAB10, RAB13 and RAB15 (in their GTP-bound forms); binding to RAB1B is of low affinity compared to other Rab proteins; at least in case of RAB8A and RAB10 can bind 2 molecules of the Rab proteins simultaneously. Interacts with STK38 and STK38L. Interacts with GRAF1/ARHGAP26, GRAF2/ARHGAP10, RAB8A, RAB8B and RAB10; may bind simultaneously to GRAFs and Rabs and connects GRAFs to Rabs. Does not interact with RAB1 and RAB11A. FAD is required as a cofactor. Expressed in the postnatal and adult hippocampus; found in dentate gyrus, the polymorphic layer, cornu ammonis (CA) 1-3 and in mossy fibers of the striatum lucidum. In adult hippocampus strongly expressed in CA3 pyramidial neurons.

The protein resides in the cytoplasm. The protein localises to the cytoskeleton. Its subcellular location is the endosome membrane. It localises to the midbody. The enzyme catalyses L-methionyl-[F-actin] + NADPH + O2 + H(+) = L-methionyl-(R)-S-oxide-[F-actin] + NADP(+) + H2O. It carries out the reaction NADPH + O2 + H(+) = H2O2 + NADP(+). In terms of biological role, monooxygenase that promotes depolymerization of F-actin by mediating oxidation of specific methionine residues on actin to form methionine-sulfoxide, resulting in actin filament disassembly and preventing repolymerization. In the absence of actin, it also functions as a NADPH oxidase producing H(2)O(2). Acts as a cytoskeletal regulator that connects NEDD9 to intermediate filaments. Also acts as a negative regulator of apoptosis via its interaction with STK38 and STK38L; acts by antagonizing STK38 and STK38L activation by MST1/STK4. Involved in regulation of lamina-specific connectivity in the nervous system such as the development of lamina-restricted hippocampal connections. Through redox regulation of the actin cytoskeleton controls the intracellular distribution of secretory vesicles containing L1/neurofascin/NgCAM family proteins in neurons, thereby regulating their cell surface levels. May act as Rab effector protein and play a role in vesicle trafficking. Promotes endosomal tubule extension by associating with RAB8 (RAB8A or RAB8B), RAB10 and GRAF (GRAF1/ARHGAP26 or GRAF2/ARHGAP10) on the endosomal membrane which may connect GRAFs to Rabs, thereby participating in neosynthesized Rab8-Rab10-Rab11-dependent protein export. This chain is [F-actin]-monooxygenase MICAL1 (Mical1), found in Mus musculus (Mouse).